The primary structure comprises 1323 residues: PH domain leucine-rich repeat-containing protein phosphatase 2 (1323 aa).

The 99-residue stretch at 150-248 (RILLSGIYNV…WQRQASKVVS (99 aa)) folds into the PH domain. LRR repeat units lie at residues 250-271 (RIST…LFYS), 273-296 (DITY…DTLY), 300-321 (QLKG…LCEI), 323-344 (TLTE…IGNL), 346-368 (NLQT…GNLQ), 369-390 (QLSS…YEKL), 392-412 (MLDR…GVLN), 416-439 (HIKH…EGNK), 440-460 (HITH…SSLC), 461-480 (SLEQ…LSGF), 481-502 (SLRT…PVPS), 503-524 (LLTF…ACEA), 526-547 (KIEV…ILSS), 549-570 (SLRK…VEHI), 571-592 (PLEV…LFSK), 595-616 (NLRY…CTGE), 621-644 (MLQL…VGHL), 645-666 (HLRI…KLNK), 669-690 (QLEE…IANC), 692-713 (RLHT…LQLP), 714-735 (QIQF…EALP), and 737-758 (TLQD…TLDI). Residues 785-1033 (SHGLAEMAGQ…DNVGAMVVYL (249 aa)) form the PPM-type phosphatase domain. 4 residues coordinate Mn(2+): aspartate 820, glycine 821, lysine 985, and aspartate 1024. A disordered region spans residues 1060–1157 (TIKDAPKPAT…DSDDDQPVEG (98 aa)). The segment covering 1071–1097 (SSSSGIASEFSSEMSTSEVSSEVGSTA) has biased composition (low complexity). The segment covering 1122-1146 (PTPTSGLFQRQPSSATFSSNQSDNG) has biased composition (polar residues). At serine 1210 the chain carries Phosphoserine. Residues 1285 to 1323 (HDLEEEVKEQMKQHQDSRLEPEPHEEDRTEPPEEFDTAL) are disordered. Residues 1292-1315 (KEQMKQHQDSRLEPEPHEEDRTEP) show a composition bias toward basic and acidic residues.

As to quaternary structure, interacts with AKT1, AKT3 and PRKCB isoform beta-II. Interacts with STK4, RPS6KB1, RAF1. Interacts with FKBP5; FKBP5 acts as a scaffold for PHLPP2 and Akt. Interacts with NHERF1; NHERF1 scaffolds a heterotrimeric complex with PTEN. Mn(2+) serves as cofactor. As to expression, in colorectal cancer tissue, expression is highest in the surface epithelium of normal colonic mucosa adjacent to the cancer tissue but is largely excluded from the crypt bases. Expression is lost or significantly decreased in 80% of tested tumors (at protein level).

It localises to the cytoplasm. Its subcellular location is the membrane. The protein localises to the nucleus. It carries out the reaction O-phospho-L-seryl-[protein] + H2O = L-seryl-[protein] + phosphate. It catalyses the reaction O-phospho-L-threonyl-[protein] + H2O = L-threonyl-[protein] + phosphate. Inhibited by AKT1, AKT2 and AKT3. Activated by oleic acid and arachidonic acid. Its function is as follows. Protein phosphatase involved in regulation of Akt and PKC signaling. Mediates dephosphorylation in the C-terminal domain hydrophobic motif of members of the AGC Ser/Thr protein kinase family; specifically acts on 'Ser-473' of AKT1, 'Ser-660' of PRKCB isoform beta-II and 'Ser-657' of PRKCA. Akt regulates the balance between cell survival and apoptosis through a cascade that primarily alters the function of transcription factors that regulate pro- and antiapoptotic genes. Dephosphorylation of 'Ser-473' of Akt triggers apoptosis and decreases cell proliferation. Also controls the phosphorylation of AKT3. Dephosphorylates STK4 on 'Thr-387' leading to STK4 activation and apoptosis. Dephosphorylates RPS6KB1 and is involved in regulation of cap-dependent translation. Inhibits cancer cell proliferation and may act as a tumor suppressor. Dephosphorylation of PRKCA and PRKCB leads to their destabilization and degradation. Dephosphorylates RAF1 inhibiting its kinase activity. The chain is PH domain leucine-rich repeat-containing protein phosphatase 2 (PHLPP2) from Homo sapiens (Human).